Here is a 111-residue protein sequence, read N- to C-terminus: Universal stress protein B (111 aa).

The next 2 membrane-spanning stretches (helical) occupy residues 1 to 21 (MIST…NMAR) and 90 to 110 (FILT…LAIW).

This sequence belongs to the universal stress protein B family.

Its subcellular location is the cell inner membrane. The protein is Universal stress protein B of Erwinia tasmaniensis (strain DSM 17950 / CFBP 7177 / CIP 109463 / NCPPB 4357 / Et1/99).